The chain runs to 89 residues: Transcriptional regulator WhiB2 (89 aa).

Residues 1–15 show a composition bias toward pro residues; that stretch reads MVPEAPAPFEEPLPP. The interval 1-24 is disordered; that stretch reads MVPEAPAPFEEPLPPEATDQWQDR. Positions 26 to 83 constitute a 4Fe-4S Wbl-type domain; that stretch reads LCAQTDPEAFFPEKGGSTREAKKICMGCEVRHECLEYALAHDERFGIWGGLSERERRR. Residue C27 participates in [4Fe-4S] cluster binding. S42 carries the post-translational modification Phosphoserine. [4Fe-4S] cluster is bound by residues C50, C53, and C59.

Belongs to the WhiB family. [4Fe-4S] cluster is required as a cofactor. May be phosphorylated, possibly on Ser-42. In terms of processing, the cluster is degraded quickly in the presence of air. Upon cluster removal intramolecular disulfide bonds are formed. Post-translationally, the Fe-S cluster can be nitrosylated by nitric oxide (NO).

The protein localises to the cytoplasm. Its function is as follows. Acts as a transcriptional regulator. Probably redox-responsive. The apo- but not holo-form probably binds DNA. In terms of biological role, the apo-form functions as a chaperone, preventing aggregation or helping in correct refolding of a number of substrates; this activity does not require ATP or the ability to bind a Fe-S cluster. Chaperone activity is insensitive to the redox state of its cysteine residues. The apo-form has no protein disulfide reductase activity. The apo-form binds to its own promoter. This Mycobacterium tuberculosis (strain ATCC 25618 / H37Rv) protein is Transcriptional regulator WhiB2 (whiB2).